Consider the following 292-residue polypeptide: ATP synthase gamma chain (292 aa).

It belongs to the ATPase gamma chain family. In terms of assembly, F-type ATPases have 2 components, CF(1) - the catalytic core - and CF(0) - the membrane proton channel. CF(1) has five subunits: alpha(3), beta(3), gamma(1), delta(1), epsilon(1). CF(0) has three main subunits: a, b and c.

Its subcellular location is the cell inner membrane. In terms of biological role, produces ATP from ADP in the presence of a proton gradient across the membrane. The gamma chain is believed to be important in regulating ATPase activity and the flow of protons through the CF(0) complex. This Nitrobacter winogradskyi (strain ATCC 25391 / DSM 10237 / CIP 104748 / NCIMB 11846 / Nb-255) protein is ATP synthase gamma chain.